Reading from the N-terminus, the 609-residue chain is Probable translation initiation factor IF-2 (609 aa).

One can recognise a tr-type G domain in the interval L12–M230. Residues G21 to T28 are G1. G21 to T28 contributes to the GTP binding site. Residues Q46 to H50 form a G2 region. Residues D86 to G89 are G3. GTP-binding positions include D86–H90 and N140–D143. The G4 stretch occupies residues N140–D143. The tract at residues S208–K210 is G5.

It belongs to the TRAFAC class translation factor GTPase superfamily. Classic translation factor GTPase family. IF-2 subfamily.

Its function is as follows. Function in general translation initiation by promoting the binding of the formylmethionine-tRNA to ribosomes. Seems to function along with eIF-2. This chain is Probable translation initiation factor IF-2, found in Ignicoccus hospitalis (strain KIN4/I / DSM 18386 / JCM 14125).